A 270-amino-acid chain; its full sequence is Small ribosomal subunit protein uS3 (270 aa).

One can recognise a KH type-2 domain in the interval 38–106; that stretch reads IRQMLTRGME…QVQLNILEVK (69 aa). Residues 212-270 form a disordered region; it reads EREAAQAAQRAAGPQRRERPGRRRRGGGGGGGQQQQQAEKATAQATEAAKAAKSGNEGS. Low complexity-rich tracts occupy residues 216–225 and 245–263; these read AQAAQRAAGP and QQQQ…AKAA.

It belongs to the universal ribosomal protein uS3 family. As to quaternary structure, part of the 30S ribosomal subunit. Forms a tight complex with proteins S10 and S14.

Binds the lower part of the 30S subunit head. Binds mRNA in the 70S ribosome, positioning it for translation. This Thermobifida fusca (strain YX) protein is Small ribosomal subunit protein uS3.